The sequence spans 157 residues: UPF0262 protein RHECIAT_CH0000657 (157 aa).

The protein belongs to the UPF0262 family.

The sequence is that of UPF0262 protein RHECIAT_CH0000657 from Rhizobium etli (strain CIAT 652).